The chain runs to 164 residues: Large ribosomal subunit protein bL21 (164 aa).

The tract at residues 105–164 (KAPTIGPRAKKEKKVEAAPADGEAPAKKAPAKKAAAKKAAPKAAAKKAPAKKAAPKAKSE) is disordered. Residues 133–164 (APAKKAAAKKAAPKAAAKKAPAKKAAPKAKSE) show a composition bias toward basic residues.

Belongs to the bacterial ribosomal protein bL21 family. As to quaternary structure, part of the 50S ribosomal subunit. Contacts protein L20.

In terms of biological role, this protein binds to 23S rRNA in the presence of protein L20. The sequence is that of Large ribosomal subunit protein bL21 from Afipia carboxidovorans (strain ATCC 49405 / DSM 1227 / KCTC 32145 / OM5) (Oligotropha carboxidovorans).